A 223-amino-acid polypeptide reads, in one-letter code: Phosphoribosylformylglycinamidine synthase subunit PurQ (223 aa).

Residues 3-223 (FAVLVFPGSN…MVKSWREQHV (221 aa)) form the Glutamine amidotransferase type-1 domain. The active-site Nucleophile is C85. Catalysis depends on residues H193 and E195.

In terms of assembly, part of the FGAM synthase complex composed of 1 PurL, 1 PurQ and 2 PurS subunits.

The protein localises to the cytoplasm. It carries out the reaction N(2)-formyl-N(1)-(5-phospho-beta-D-ribosyl)glycinamide + L-glutamine + ATP + H2O = 2-formamido-N(1)-(5-O-phospho-beta-D-ribosyl)acetamidine + L-glutamate + ADP + phosphate + H(+). The enzyme catalyses L-glutamine + H2O = L-glutamate + NH4(+). Its pathway is purine metabolism; IMP biosynthesis via de novo pathway; 5-amino-1-(5-phospho-D-ribosyl)imidazole from N(2)-formyl-N(1)-(5-phospho-D-ribosyl)glycinamide: step 1/2. Its function is as follows. Part of the phosphoribosylformylglycinamidine synthase complex involved in the purines biosynthetic pathway. Catalyzes the ATP-dependent conversion of formylglycinamide ribonucleotide (FGAR) and glutamine to yield formylglycinamidine ribonucleotide (FGAM) and glutamate. The FGAM synthase complex is composed of three subunits. PurQ produces an ammonia molecule by converting glutamine to glutamate. PurL transfers the ammonia molecule to FGAR to form FGAM in an ATP-dependent manner. PurS interacts with PurQ and PurL and is thought to assist in the transfer of the ammonia molecule from PurQ to PurL. This Staphylococcus aureus (strain Mu50 / ATCC 700699) protein is Phosphoribosylformylglycinamidine synthase subunit PurQ.